Here is a 433-residue protein sequence, read N- to C-terminus: Ornithine decarboxylase, chloroplastic (433 aa).

Lys-96 bears the N6-(pyridoxal phosphate)lysine mark. Pyridoxal 5'-phosphate-binding positions include Ser-228, Gly-266, and 299 to 302 (EPGR). 342-343 (YD) is a substrate binding site. The Proton donor; shared with dimeric partner role is filled by Cys-378. A substrate-binding site is contributed by Asp-379. Tyr-407 contacts pyridoxal 5'-phosphate.

The protein belongs to the Orn/Lys/Arg decarboxylase class-II family. As to quaternary structure, homodimer. Only the dimer is catalytically active, as the active sites are constructed of residues from both monomers. Pyridoxal 5'-phosphate serves as cofactor.

The protein localises to the plastid. The protein resides in the chloroplast. The catalysed reaction is L-ornithine + H(+) = putrescine + CO2. It participates in alkaloid biosynthesis; nicotine biosynthesis. The protein operates within amine and polyamine biosynthesis; putrescine biosynthesis via L-ornithine pathway; putrescine from L-ornithine: step 1/1. Its function is as follows. Involved in the biosynthesis of pyridine alkaloid natural products, leading mainly to the production of anabasine, anatabine, nicotine and nornicotine, effective deterrents against herbivores with antiparasitic and pesticide properties (neurotoxins); nornicotine serves as the precursor in the synthesis of the carcinogen compound N'-nitrosonornicotine (NNN). Catalyzes the first and rate-limiting step of polyamine biosynthesis that converts ornithine into putrescine, which is the precursor for the polyamines, spermidine and spermine. Polyamines are essential for cell proliferation and are implicated in cellular processes, ranging from DNA replication to apoptosis. The chain is Ornithine decarboxylase, chloroplastic from Nicotiana glauca (Glaucous tobacco).